Consider the following 590-residue polypeptide: MPLGGFAGLKEKLNPGKEELKNNVGDSLGNLQKKIDGSNVTEEDNIELTEDGRPVAAPKRSPPLLDCGCFGLPKRYIIAMLSGLGFCISFGIRCNLGVAIVEMVNNNTVYINGTAVMQPAQFNWDPETVGLIHGSFFWGYIVTQIPGGFISNKLAANRVFGAAIFLTSVLNMFIPSAARVHYGCVMFVRILQGLVEGVTYPACHGMWSKWAPPLERSRLATTSFCGSYAGAVIAMPLAGILVQYVGWPSVFYIYGVFGIIWYIFWILLAYNSPAVHPTISEEERNYIETSIGEGANLMSSTEKFKTPWREFFTSMPVYAIIVANFCRSWTFYLLLISQPAYFEEVFGFPISKVGILSAVPHMVMTIIVPIGGQLADFLRSRKILSTTTVRKIMNCGGFGMEATLLLVVGFSHTRAVAISFLILAVGFSGFAISGFNVNHLDIAPRYASILMGISNGVGTLSGMVCPLIVGALTKHKTRLEWQHVFVIASMVHYTGVIFYAIFASGEKQDWADPENTSDEKCGIIGEDELADETEPSSDSGLATRQKTYGTTDNSSGRKQGWKKKRGVTMQAEDDHESNHYENGEYQTQYQ.

Residues 1-76 (MPLGGFAGLK…CGCFGLPKRY (76 aa)) lie on the Cytoplasmic side of the membrane. Residues 77–97 (IIAMLSGLGFCISFGIRCNLG) traverse the membrane as a helical segment. Residues 98–130 (VAIVEMVNNNTVYINGTAVMQPAQFNWDPETVG) lie on the Vesicular side of the membrane. N-linked (GlcNAc...) asparagine glycans are attached at residues N106 and N112. A helical transmembrane segment spans residues 131–151 (LIHGSFFWGYIVTQIPGGFIS). The Cytoplasmic portion of the chain corresponds to 152–153 (NK). A helical membrane pass occupies residues 154–174 (LAANRVFGAAIFLTSVLNMFI). Residues 175–182 (PSAARVHY) lie on the Vesicular side of the membrane. Residues 183–203 (GCVMFVRILQGLVEGVTYPAC) form a helical membrane-spanning segment. At 204-221 (HGMWSKWAPPLERSRLAT) the chain is on the cytoplasmic side. The chain crosses the membrane as a helical span at residues 222–242 (TSFCGSYAGAVIAMPLAGILV). The Vesicular portion of the chain corresponds to 243 to 249 (QYVGWPS). The chain crosses the membrane as a helical span at residues 250-270 (VFYIYGVFGIIWYIFWILLAY). Residues 271 to 315 (NSPAVHPTISEEERNYIETSIGEGANLMSSTEKFKTPWREFFTSM) lie on the Cytoplasmic side of the membrane. The helical transmembrane segment at 316-336 (PVYAIIVANFCRSWTFYLLLI) threads the bilayer. The Vesicular segment spans residues 337 to 354 (SQPAYFEEVFGFPISKVG). A helical transmembrane segment spans residues 355 to 375 (ILSAVPHMVMTIIVPIGGQLA). The Cytoplasmic portion of the chain corresponds to 376 to 391 (DFLRSRKILSTTTVRK). The helical transmembrane segment at 392–412 (IMNCGGFGMEATLLLVVGFSH) threads the bilayer. Residues 413–414 (TR) are Vesicular-facing. The helical transmembrane segment at 415 to 435 (AVAISFLILAVGFSGFAISGF) threads the bilayer. The Cytoplasmic portion of the chain corresponds to 436–448 (NVNHLDIAPRYAS). Residues 449–469 (ILMGISNGVGTLSGMVCPLIV) form a helical membrane-spanning segment. Over 470-482 (GALTKHKTRLEWQ) the chain is Vesicular. A helical transmembrane segment spans residues 483–503 (HVFVIASMVHYTGVIFYAIFA). Residues 504–587 (SGEKQDWADP…NHYENGEYQT (84 aa)) lie on the Cytoplasmic side of the membrane. Over residues 526-535 (EDELADETEP) the composition is skewed to acidic residues. The segment at 526–590 (EDELADETEP…ENGEYQTQYQ (65 aa)) is disordered. The span at 536–557 (SSDSGLATRQKTYGTTDNSSGR) shows a compositional bias: polar residues.

The protein belongs to the major facilitator superfamily. Sodium/anion cotransporter family. VGLUT subfamily.

The protein localises to the cytoplasmic vesicle. The protein resides in the secretory vesicle. It localises to the synaptic vesicle membrane. Its subcellular location is the cell membrane. It is found in the synapse. The protein localises to the synaptosome. It carries out the reaction L-glutamate(out) = L-glutamate(in). It catalyses the reaction 3 Na(+)(out) + phosphate(out) = 3 Na(+)(in) + phosphate(in). The enzyme catalyses chloride(in) = chloride(out). With respect to regulation, the L-glutamate uniporter activity exhibits a biphasic dependence on chloride concentration. Chloride channel activity is allosterically activated by lumenal H(+) and Cl(-) leading to synaptic vesicles acidification. The glutamate transport activity is allosterically activated by lumenal H(+) and Cl(-), preventing non-vesicular L-glutamate release. In terms of biological role, multifunctional transporter that transports L-glutamate as well as multiple ions such as chloride, sodium and phosphate. At the synaptic vesicle membrane, mainly functions as an uniporter that mediates the uptake of L-glutamate into synaptic vesicles at presynaptic nerve terminals of excitatory neural cells. The L-glutamate uniporter activity is electrogenic and is driven by the proton electrochemical gradient, mainly by the electrical gradient established by the vacuolar H(+)-ATPase across the synaptic vesicle membrane. In addition, functions as a chloride channel that allows a chloride permeation through the synaptic vesicle membrane that affects the proton electrochemical gradient and promotes synaptic vesicles acidification. At the plasma membrane, following exocytosis, functions as a symporter of Na(+) and phosphate from the extracellular space to the cytoplasm allowing synaptic phosphate homeostasis regulation. The symporter activity is electrogenic. Moreover, operates synergistically with SLC18A3/VACHT under a constant H(+) gradient, thereby allowing striatal vesicular acetylcholine uptake. This chain is Vesicular glutamate transporter 3, found in Danio rerio (Zebrafish).